A 547-amino-acid chain; its full sequence is Probable bifunctional tRNA threonylcarbamoyladenosine biosynthesis protein (547 aa).

Residues 1-329 (MDTSKDLICI…YRSDMVEVNW (329 aa)) form a kae1 region. 3 residues coordinate Fe cation: His112, His116, and Tyr133. L-threonylcarbamoyladenylate-binding positions include 133–137 (YVSGG), Asp165, Gly178, Glu182, and Asn262. A Fe cation-binding site is contributed by Asp290. A Protein kinase domain is found at 346–547 (IIPEHLIGKG…KEVEKRARYL (202 aa)). ATP is bound by residues 352–360 (IGKGAEADI) and Lys373. Asp465 (proton acceptor; for kinase activity) is an active-site residue.

It in the N-terminal section; belongs to the KAE1 / TsaD family. The protein in the C-terminal section; belongs to the protein kinase superfamily. Tyr protein kinase family. BUD32 subfamily. In terms of assembly, component of the KEOPS complex that consists of Kae1, Bud32, Cgi121 and Pcc1; the whole complex dimerizes. Fe(2+) is required as a cofactor.

It localises to the cytoplasm. The enzyme catalyses L-seryl-[protein] + ATP = O-phospho-L-seryl-[protein] + ADP + H(+). It catalyses the reaction L-threonyl-[protein] + ATP = O-phospho-L-threonyl-[protein] + ADP + H(+). The catalysed reaction is L-threonylcarbamoyladenylate + adenosine(37) in tRNA = N(6)-L-threonylcarbamoyladenosine(37) in tRNA + AMP + H(+). Its function is as follows. Required for the formation of a threonylcarbamoyl group on adenosine at position 37 (t(6)A37) in tRNAs that read codons beginning with adenine. Is a component of the KEOPS complex that is probably involved in the transfer of the threonylcarbamoyl moiety of threonylcarbamoyl-AMP (TC-AMP) to the N6 group of A37. The Kae1 domain likely plays a direct catalytic role in this reaction. The Bud32 domain probably displays kinase activity that regulates Kae1 function. The chain is Probable bifunctional tRNA threonylcarbamoyladenosine biosynthesis protein from Methanococcus maripaludis (strain C7 / ATCC BAA-1331).